We begin with the raw amino-acid sequence, 428 residues long: Protein ECERIFERUM 26 (428 aa).

Positions 1–36 (MGRSQEQGQGQGPVHSIRLSTVGATRPTETGTTHEP) are disordered. A compositionally biased stretch (low complexity) spans 21–36 (TVGATRPTETGTTHEP).

It belongs to the plant acyltransferase family. In terms of tissue distribution, highly expressed in leaves.

It localises to the cytoplasm. Its subcellular location is the cytosol. Involved in biosynthesis of the epicuticular wax. Plays a role in very-long-chain fatty acid (VLCFA) biosynthesis and is required for C30 fatty acid elongation in leaf. Despite its classification as a BAHD acyltransferase based on sequence homology, CER26 does not seem to share the catalytic mechanism of the members of the BAHD family. The protein is Protein ECERIFERUM 26 (CER26) of Arabidopsis thaliana (Mouse-ear cress).